The primary structure comprises 95 residues: Protein TusB (95 aa).

Belongs to the DsrH/TusB family. In terms of assembly, heterohexamer, formed by a dimer of trimers. The hexameric TusBCD complex contains 2 copies each of TusB, TusC and TusD. The TusBCD complex interacts with TusE.

It localises to the cytoplasm. In terms of biological role, part of a sulfur-relay system required for 2-thiolation of 5-methylaminomethyl-2-thiouridine (mnm(5)s(2)U) at tRNA wobble positions. The polypeptide is Protein TusB (Escherichia coli O45:K1 (strain S88 / ExPEC)).